A 183-amino-acid polypeptide reads, in one-letter code: ATP synthase subunit delta (183 aa).

This sequence belongs to the ATPase delta chain family. In terms of assembly, F-type ATPases have 2 components, F(1) - the catalytic core - and F(0) - the membrane proton channel. F(1) has five subunits: alpha(3), beta(3), gamma(1), delta(1), epsilon(1). F(0) has three main subunits: a(1), b(2) and c(10-14). The alpha and beta chains form an alternating ring which encloses part of the gamma chain. F(1) is attached to F(0) by a central stalk formed by the gamma and epsilon chains, while a peripheral stalk is formed by the delta and b chains.

The protein resides in the cell inner membrane. F(1)F(0) ATP synthase produces ATP from ADP in the presence of a proton or sodium gradient. F-type ATPases consist of two structural domains, F(1) containing the extramembraneous catalytic core and F(0) containing the membrane proton channel, linked together by a central stalk and a peripheral stalk. During catalysis, ATP synthesis in the catalytic domain of F(1) is coupled via a rotary mechanism of the central stalk subunits to proton translocation. Its function is as follows. This protein is part of the stalk that links CF(0) to CF(1). It either transmits conformational changes from CF(0) to CF(1) or is implicated in proton conduction. The protein is ATP synthase subunit delta of Solidesulfovibrio magneticus (strain ATCC 700980 / DSM 13731 / RS-1) (Desulfovibrio magneticus).